The sequence spans 417 residues: Putative UDP-arabinose 4-epimerase 2 (417 aa).

The Cytoplasmic segment spans residues 1 to 31 (MLNLGRARTGRQNRSMSFEGLDFADPKKNNN). Residues 32–54 (YMGKIVLVMTLTAMCILLLNQSP) form a helical; Signal-anchor for type II membrane protein membrane-spanning segment. Residues 55-417 (TFNTPSVFSR…YGSSSLVSAY (363 aa)) lie on the Lumenal side of the membrane. 71 to 102 (HVLVTGGAGYIGSHAALRLLKDSYRVTIVDNL) contacts NAD(+). Tyr-219 acts as the Proton acceptor in catalysis.

It belongs to the NAD(P)-dependent epimerase/dehydratase family. Requires NAD(+) as cofactor.

The protein localises to the golgi apparatus. The protein resides in the golgi stack membrane. The catalysed reaction is UDP-beta-L-arabinopyranose = UDP-alpha-D-xylose. The protein operates within nucleotide-sugar biosynthesis; UDP-L-arabinose biosynthesis; UDP-L-arabinose from UDP-alpha-D-xylose: step 1/1. It functions in the pathway cell wall biogenesis; cell wall polysaccharide biosynthesis. The polypeptide is Putative UDP-arabinose 4-epimerase 2 (Arabidopsis thaliana (Mouse-ear cress)).